The following is a 646-amino-acid chain: Envelope glycoprotein (646 aa).

The N-terminal stretch at 1-25 (MLSVAQSSALFLLQAICILYITKLT) is a signal peptide. Topologically, residues 26 to 119 (IPTPVSEINL…INYLLRFISA (94 aa)) are lumenal. Residues asparagine 72, asparagine 80, and asparagine 101 are each glycosylated (N-linked (GlcNAc...) asparagine; by host). A helical transmembrane segment spans residues 120–140 (IIVYLLLSISKQGIFLFFSIV). The Cytoplasmic segment spans residues 141–176 (HYSFKFIKNKKSCNICGNDFYFIHIDCPKPDFTKRS). The helical transmembrane segment at 177–197 (DFHMMFYIILFLSLFFVVTHA) threads the bilayer. Residues 198 to 588 (DDNVYNYYEH…KNLLYIDYKK (391 aa)) are Lumenal-facing. N-linked (GlcNAc...) asparagine; by host glycans are attached at residues asparagine 247 and asparagine 336. Residues 589-609 (IIFVFLVAIISIGIFLRSPYM) form a helical membrane-spanning segment. Residues 610–646 (LLSSILKFRKRRKVVATNRSEQLVMDDDVDVFIGPPS) are Cytoplasmic-facing.

In terms of assembly, G2 and G1 interact with each other. In terms of processing, specific enzymatic cleavages in vivo yield mature proteins including glycoprotein G1 and glycoprotein G2. Glycosylated. Glycosylation is essential for proper subcellular location.

It localises to the virion membrane. The protein resides in the host Golgi apparatus membrane. Its function is as follows. Glycoprotein G2 and glycoprotein G1 interact with each other and are present at the surface of the virion. They are able to attach the virion to a cell receptor and to promote fusion of membranes after endocytosis of the virion. The protein is Envelope glycoprotein of European mountain ash ringspot-associated virus (isolate Sorbus aucuparia) (EMARAV).